The sequence spans 429 residues: Forkhead box protein A1-A (429 aa).

The segment at residues 159–253 is a DNA-binding region (fork-head); the sequence is KPPYSYISLI…ENGCYLRRQK (95 aa). The span at 258–274 shows a compositional bias: basic and acidic residues; sequence EKTQGGKGNQDGRKDHS. The disordered stretch occupies residues 258–341; the sequence is EKTQGGKGNQ…HSTHSLAHES (84 aa). Low complexity predominate over residues 287 to 304; it reads SSQMDSSSSMSNPSSSPQ. The span at 325-336 shows a compositional bias: polar residues; the sequence is PLSSHQNHSTHS.

In terms of tissue distribution, at neurula stage, expressed in the notochord but not in the neural floor plate. During tailbud stages, expressed in the neural floor plate. At stage 35, expressed in the rhombencephalon, mesencephalon, pharyngeal pouches, foregut and pronephros. At stage 44, expressed in a region of the gut on the right hand side of the embryo. Expressed in the adult lung and liver.

Its subcellular location is the nucleus. In terms of biological role, probable transcription factor. The sequence is that of Forkhead box protein A1-A (foxa1-a) from Xenopus laevis (African clawed frog).